We begin with the raw amino-acid sequence, 330 residues long: Polyprenol dehydrogenase (330 aa).

NAD(+) is bound by residues I55, Y208, K212, and T245. Y208 serves as the catalytic Proton acceptor.

Belongs to the short-chain dehydrogenases/reductases (SDR) family. As to expression, widely expressed. Highly expressed in the pancreas.

The protein localises to the lipid droplet. It localises to the secreted. The enzyme catalyses a di-trans,poly-cis-polyprenol + NAD(+) = a di-trans,poly-cis-polyprenal + NADH + H(+). It catalyses the reaction a di-trans,poly-cis-polyprenol + NADP(+) = a di-trans,poly-cis-polyprenal + NADPH + H(+). The catalysed reaction is a di-trans,poly-cis-dolichol + NADP(+) = a di-trans,poly-cis-dolichal + NADPH + H(+). It carries out the reaction a di-trans,poly-cis-dolichol + NAD(+) = a di-trans,poly-cis-dolichal + NADH + H(+). It functions in the pathway protein modification; protein glycosylation. Functionally, oxidoreductase that plays a key role in early steps of protein N-linked glycosylation by mediating two non-consecutive steps in dolichol biosynthesis. Acts both as a NAD(+)-dependent dehydrogenase and as a NADPH-dependent reductase during the conversion of polyprenol into dolichol. First catalyzes the NAD(+)-dependent dehydrogenation of polyprenol into polyprenal; polyprenal is then reduced into dolichal by SRD5A3. It then catalyzes the NADPH-dependent reduction of dolichal into dolichol. May also acts as a positive regulator of starvation-induced autophagy. The chain is Polyprenol dehydrogenase from Homo sapiens (Human).